The chain runs to 330 residues: Ketol-acid reductoisomerase (NADP(+)) (330 aa).

Residues 2 to 182 (ARLYYDTDAN…GGTRAGILET (181 aa)) form the KARI N-terminal Rossmann domain. Residues 25-28 (YGSQ), Ser-51, Ser-53, and 83-86 (DEVQ) each bind NADP(+). The active site involves His-108. Gly-134 lines the NADP(+) pocket. The KARI C-terminal knotted domain occupies 183-328 (TFREETETDL…RELRAMFSWL (146 aa)). Mg(2+)-binding residues include Asp-191, Glu-195, Glu-227, and Glu-231. Residue Ser-252 coordinates substrate.

It belongs to the ketol-acid reductoisomerase family. Requires Mg(2+) as cofactor.

The enzyme catalyses (2R)-2,3-dihydroxy-3-methylbutanoate + NADP(+) = (2S)-2-acetolactate + NADPH + H(+). The catalysed reaction is (2R,3R)-2,3-dihydroxy-3-methylpentanoate + NADP(+) = (S)-2-ethyl-2-hydroxy-3-oxobutanoate + NADPH + H(+). It functions in the pathway amino-acid biosynthesis; L-isoleucine biosynthesis; L-isoleucine from 2-oxobutanoate: step 2/4. Its pathway is amino-acid biosynthesis; L-valine biosynthesis; L-valine from pyruvate: step 2/4. Functionally, involved in the biosynthesis of branched-chain amino acids (BCAA). Catalyzes an alkyl-migration followed by a ketol-acid reduction of (S)-2-acetolactate (S2AL) to yield (R)-2,3-dihydroxy-isovalerate. In the isomerase reaction, S2AL is rearranged via a Mg-dependent methyl migration to produce 3-hydroxy-3-methyl-2-ketobutyrate (HMKB). In the reductase reaction, this 2-ketoacid undergoes a metal-dependent reduction by NADPH to yield (R)-2,3-dihydroxy-isovalerate. The sequence is that of Ketol-acid reductoisomerase (NADP(+)) from Synechococcus sp. (strain JA-2-3B'a(2-13)) (Cyanobacteria bacterium Yellowstone B-Prime).